A 345-amino-acid polypeptide reads, in one-letter code: Calcium uniporter regulatory subunit MCUb, mitochondrial (345 aa).

The N-terminal 44 residues, 1-44 (MPGALSGRRMLPSGLCLGRWQLLRTIRARGRGDPRELPSTPQVL), are a transit peptide targeting the mitochondrion. Positions 188-221 (EIQKRRERHLMAKIDHLQEQLRPLEQVKAAIEAR) form a coiled coil. The next 2 helical transmembrane spans lie at 229–249 (LLWAGLALLSVQGGALAWLTW) and 259–279 (PVTFFLSFANSIVFFAYFIIT). A coiled-coil region spans residues 306 to 334 (FDVEQYNKLKEDLAEATESLESVRRSLRL).

This sequence belongs to the MCU (TC 1.A.77) family. In terms of assembly, homooligomer. Associates with the uniplex complex, composed of MCU, MICU1, MICU2 and EMRE/SMDT1, inhibiting its activity. As to expression, detected in lung, brain and heart, and at lower levels in white fat, skeletal muscle and spleen. Detected at very low levels in kidney and liver. Highly expressed in macrophages during the progression of skeletal muscle regeneration.

It localises to the mitochondrion inner membrane. In terms of biological role, negative regulator of the mitochondrial calcium uniporter (MCU), a channel that mediates calcium uptake into the mitochondrial matrix. MCUB is required to limit mitochondrial calcium overload during stress. Acts as a dominant-negative regulator that displaces MCU from the functional uniplex complex and thereby decreases the association of calcium sensors MICU1 and MICU2, preventing channel gating. Mitochondrial calcium homeostasis plays key roles in mitochondrial metabolism. Acts as an important regulator of mitochondrial metabolism in response to stress in muscle cells: induced in response to fasting, leading to restrict mitochondrial calcium uptake, resulting in reprogramming of mitochondria toward fatty acid oxidation preference. Acts as a regulator of macrophage polarization during skeletal muscle regeneration: inhibition of mitochondrial calcium uptake drives differentiation of macrophages with anti-inflammatory profile, promoting the differentiation and fusion of satellite cells. In Mus musculus (Mouse), this protein is Calcium uniporter regulatory subunit MCUb, mitochondrial.